The primary structure comprises 410 residues: Platelet-activating factor acetylhydrolase IB subunit beta (410 aa).

Positions 1–38 (MVLSQRQRDELNRAIADYLRSNGYEEAYSVFKKEAELD) are required for self-association and interaction with PAFAH1B2 and PAFAH1B3. The interaction with NDE1 stretch occupies residues 1 to 66 (MVLSQRQRDE…SVIRLQKKVM (66 aa)). The segment at 1-102 (MVLSQRQRDE…EWIPRPPEKY (102 aa)) is interaction with NDEL1. One can recognise a LisH domain in the interval 7 to 39 (QRDELNRAIADYLRSNGYEEAYSVFKKEAELDM). Position 53 is an N6-acetyllysine (Lys-53). Residues 56–82 (TSVIRLQKKVMELESKLNEAKEEFTSG) are a coiled coil. Residues 83 to 410 (GPLGQKRDPK…DQTVKVWECR (328 aa)) form an interaction with dynein and dynactin region. WD repeat units follow at residues 106 to 147 (GHRS…RTLK), 148 to 187 (GHTD…CIRT), 190 to 229 (GHDH…CVKT), 232 to 271 (GHRE…CKAE), 274 to 333 (EHEH…CLMT), 336 to 377 (GHDN…KTLN), and 378 to 410 (AHEH…WECR). At Ser-109 the chain carries Phosphoserine. Residues 367-409 (YKNKRCMKTLNAHEHFVTSLDFHKTAPYVVTGSVDQTVKVWEC) form an interaction with DCX region. Positions 388–410 (FHKTAPYVVTGSVDQTVKVWECR) are interaction with NDEL1.

This sequence belongs to the WD repeat LIS1/nudF family. As to quaternary structure, can self-associate. Component of the cytosolic PAF-AH (I) heterotetrameric enzyme, which is composed of PAFAH1B1 (beta), PAFAH1B2 (alpha2) and PAFAH1B3 (alpha1) subunits. The catalytic activity of the enzyme resides in the alpha1 (PAFAH1B3) and alpha2 (PAFAH1B2) subunits, whereas the beta subunit (PAFAH1B1) has regulatory activity. Trimer formation is not essential for the catalytic activity. Interacts with the catalytic dimer of PAF-AH (I) heterotetrameric enzyme: interacts with PAFAH1B2 homodimer (alpha2/alpha2 homodimer), PAFAH1B3 homodimer (alpha1/alpha1 homodimer) and PAFAH1B2-PAFAH1B3 heterodimer (alpha2/alpha1 heterodimer). Interacts with DCX, dynein, dynactin, IQGAP1, KATNB1, NDE1, NDEL1, NUDC and RSN. Interacts with DISC1, and this interaction is enhanced by NDEL1. Interacts with DAB1 when DAB1 is phosphorylated in response to RELN/reelin signaling. Interacts with INTS13. Interacts with DCDC1.

It localises to the cytoplasm. It is found in the cytoskeleton. The protein resides in the microtubule organizing center. Its subcellular location is the centrosome. The protein localises to the spindle. It localises to the nucleus membrane. In terms of biological role, regulatory subunit (beta subunit) of the cytosolic type I platelet-activating factor (PAF) acetylhydrolase (PAF-AH (I)), an enzyme that catalyzes the hydrolyze of the acetyl group at the sn-2 position of PAF and its analogs and participates in PAF inactivation. Regulates the PAF-AH (I) activity in a catalytic dimer composition-dependent manner. Positively regulates the activity of the minus-end directed microtubule motor protein dynein. May enhance dynein-mediated microtubule sliding by targeting dynein to the microtubule plus end. Required for several dynein- and microtubule-dependent processes such as the maintenance of Golgi integrity, the peripheral transport of microtubule fragments and the coupling of the nucleus and centrosome. Required during brain development for the proliferation of neuronal precursors and the migration of newly formed neurons from the ventricular/subventricular zone toward the cortical plate. Neuronal migration involves a process called nucleokinesis, whereby migrating cells extend an anterior process into which the nucleus subsequently translocates. During nucleokinesis dynein at the nuclear surface may translocate the nucleus towards the centrosome by exerting force on centrosomal microtubules. Also required for proper activation of Rho GTPases and actin polymerization at the leading edge of locomoting cerebellar neurons and postmigratory hippocampal neurons in response to calcium influx triggered via NMDA receptors. May also play a role in other forms of cell locomotion including the migration of fibroblasts during wound healing. Required for dynein recruitment to microtubule plus ends and BICD2-bound cargos. May modulate the Reelin pathway through interaction of the PAF-AH (I) catalytic dimer with VLDLR. The sequence is that of Platelet-activating factor acetylhydrolase IB subunit beta from Felis catus (Cat).